Reading from the N-terminus, the 298-residue chain is Protease HtpX homolog (298 aa).

Transmembrane regions (helical) follow at residues 5-25 (IFLF…VLSV) and 45-65 (MALL…SLAI). Histidine 155 is a binding site for Zn(2+). The active site involves glutamate 156. Histidine 159 lines the Zn(2+) pocket. Helical transmembrane passes span 170–190 (LLQG…AWIA) and 204–224 (FIAM…VVFA). Zn(2+) is bound at residue glutamate 230.

This sequence belongs to the peptidase M48B family. Zn(2+) is required as a cofactor.

It is found in the cell membrane. The sequence is that of Protease HtpX homolog from Bacillus subtilis (strain 168).